The primary structure comprises 540 residues: Membrane protein insertase YidC (540 aa).

Transmembrane regions (helical) follow at residues 7 to 27 (LLVL…QMDY), 345 to 365 (IVSN…GILY), 415 to 435 (LGGC…YWTF), 453 to 473 (LSAQ…MFLL), and 494 to 514 (PLIF…YWLV).

It belongs to the OXA1/ALB3/YidC family. Type 1 subfamily. As to quaternary structure, interacts with the Sec translocase complex via SecD. Specifically interacts with transmembrane segments of nascent integral membrane proteins during membrane integration.

The protein resides in the cell inner membrane. Its function is as follows. Required for the insertion and/or proper folding and/or complex formation of integral membrane proteins into the membrane. Involved in integration of membrane proteins that insert both dependently and independently of the Sec translocase complex, as well as at least some lipoproteins. Aids folding of multispanning membrane proteins. This Mannheimia succiniciproducens (strain KCTC 0769BP / MBEL55E) protein is Membrane protein insertase YidC.